We begin with the raw amino-acid sequence, 1604 residues long: Putative surface cell antigen sca2 (1604 aa).

Residues 1 to 33 (MSLQNSHSKKYVLTFFMSTCLLTSSFLSTSARA) form the signal peptide. Disordered stretches follow at residues 324-354 (TTKP…RTKP), 554-603 (NVNN…SNPN), and 1183-1240 (QQEN…KSLL). Residues 554–564 (NVNNNSNKGQN) show a composition bias toward low complexity. The span at 568–587 (ILPPTPPLNGSMPPSPPPPL) shows a compositional bias: pro residues. Composition is skewed to basic and acidic residues over residues 1193–1213 (SSTK…KSDS) and 1227–1240 (SKND…KSLL). Positions 1325–1604 (EASINRGVWI…QGLIKLKVNL (280 aa)) constitute an Autotransporter domain.

The protein localises to the cell outer membrane. This Rickettsia felis (strain ATCC VR-1525 / URRWXCal2) (Rickettsia azadi) protein is Putative surface cell antigen sca2 (sca2).